The sequence spans 512 residues: MEELKKYLERDRYWQQHFLYPLLFQEYIYALAHIHNRGLNGSIFYESGEILGYDNKSSFILVKRLILRMYQQNFEIHSSNESHKNRFVGHNNPFFSKMIWGGFAVIVEIPFSLPSLIEEKKKEIPKSQNLRSIHSXFPFLXDQFSHLNYVSDIRIPYPIHLEILIQIIQSWIQDVPSLHLLRFFLYEYHNWNCFITLKKSLSIFAKGNPRLFWFLYNSYVSEYESVFCFLRKQSSYLLSTSYRNLIERTHFYGKMEHLAVVCCNCFHKTLQLFKDPCIHYVRYQGKSILASKGTYLLMKKWKCYLVNFWECHFSFWSQPYRIHINQLSNNSFDFLGYFSIVLINPLTVRXQMLEYSCLIDNTATKKFDTIVPIIPLIGSLSKAKFCNVSGHPISKPIWTDLSDSDIIDRFVRICRNLSHYHSGSSKKQSLYRMKYILRLSCARTLARKHKTTVRAFFQRLGSGFLEEFFAEEQKFLSLVLPGIPLASGSDRVYKERIWYLDIIRINDLVNYS.

It belongs to the intron maturase 2 family. MatK subfamily.

It localises to the plastid. It is found in the chloroplast. Functionally, usually encoded in the trnK tRNA gene intron. Probably assists in splicing its own and other chloroplast group II introns. This chain is Maturase K, found in Alisma canaliculatum (Water plantain).